The primary structure comprises 158 residues: 2-C-methyl-D-erythritol 2,4-cyclodiphosphate synthase (158 aa).

Aspartate 8 and histidine 10 together coordinate a divalent metal cation. 4-CDP-2-C-methyl-D-erythritol 2-phosphate is bound by residues 8 to 10 (DVH) and 34 to 35 (HS). Histidine 42 lines the a divalent metal cation pocket. Residues 56-58 (DIG), 61-65 (FPDTD), 100-106 (AQVPKMA), 132-135 (TTTE), phenylalanine 139, and arginine 142 each bind 4-CDP-2-C-methyl-D-erythritol 2-phosphate.

Belongs to the IspF family. In terms of assembly, homotrimer. It depends on a divalent metal cation as a cofactor.

The catalysed reaction is 4-CDP-2-C-methyl-D-erythritol 2-phosphate = 2-C-methyl-D-erythritol 2,4-cyclic diphosphate + CMP. It participates in isoprenoid biosynthesis; isopentenyl diphosphate biosynthesis via DXP pathway; isopentenyl diphosphate from 1-deoxy-D-xylulose 5-phosphate: step 4/6. In terms of biological role, involved in the biosynthesis of isopentenyl diphosphate (IPP) and dimethylallyl diphosphate (DMAPP), two major building blocks of isoprenoid compounds. Catalyzes the conversion of 4-diphosphocytidyl-2-C-methyl-D-erythritol 2-phosphate (CDP-ME2P) to 2-C-methyl-D-erythritol 2,4-cyclodiphosphate (ME-CPP) with a corresponding release of cytidine 5-monophosphate (CMP). This Sodalis glossinidius (strain morsitans) protein is 2-C-methyl-D-erythritol 2,4-cyclodiphosphate synthase.